Here is a 149-residue protein sequence, read N- to C-terminus: Calmodulin (149 aa).

A2 carries the post-translational modification N-acetylalanine. EF-hand domains follow at residues 8 to 43 (EQVS…LGQN), 44 to 79 (PSES…KMKD), 81 to 116 (DSEE…IGEK), and 117 to 149 (LTDD…MMQK). Positions 21, 23, 25, 27, 32, 57, 59, 61, 63, 68, 94, 96, 98, 105, 130, 132, 134, 136, and 141 each coordinate Ca(2+).

It belongs to the calmodulin family.

Its function is as follows. Calmodulin mediates the control of a large number of enzymes, ion channels and other proteins by Ca(2+). Among the enzymes to be stimulated by the calmodulin-Ca(2+) complex are a number of protein kinases and phosphatases. In Colletotrichum gloeosporioides (Anthracnose fungus), this protein is Calmodulin.